A 145-amino-acid chain; its full sequence is Small ribosomal subunit protein uS9 (145 aa).

The segment covering 1–13 has biased composition (polar residues); the sequence is MATDQHSNKSNVS. Positions 1 to 24 are disordered; the sequence is MATDQHSNKSNVSAARKPLSPSPT.

The protein belongs to the universal ribosomal protein uS9 family.

It is found in the cytoplasm. This is Small ribosomal subunit protein uS9 (RPS16) from Lupinus polyphyllus (Large-leaved lupine).